A 418-amino-acid chain; its full sequence is Histidine--tRNA ligase (418 aa).

This sequence belongs to the class-II aminoacyl-tRNA synthetase family. Homodimer.

It is found in the cytoplasm. The enzyme catalyses tRNA(His) + L-histidine + ATP = L-histidyl-tRNA(His) + AMP + diphosphate + H(+). This Dehalococcoides mccartyi (strain ATCC BAA-2266 / KCTC 15142 / 195) (Dehalococcoides ethenogenes (strain 195)) protein is Histidine--tRNA ligase.